A 375-amino-acid polypeptide reads, in one-letter code: Solute carrier family 35 member F2 (375 aa).

Position 1 is an N-acetylmethionine (Met-1). Phosphoserine is present on residues Ser-5, Ser-22, Ser-25, and Ser-28. Helical transmembrane passes span 39–59 (ILKTIALGQMLSLCICGTAIT), 73–93 (MLQSFINYCLLFLVYTLMLAF), 108–126 (WWKYTLLGLADVEANYLIV), 136–156 (SVQLLDCFGIPVLMALSWFIL), 165–185 (FIAVFVCLLGVGTMVGADILA), 195–215 (VLIGDILVLLGASLYAVSNVC), 227–247 (EFLGMVGLFGTIISGIQLLIV), 263–283 (LLFVAFALCMFCLYSFMPLVI), 290–310 (SVNLGILTADLYSLFFGLFLF), and 314–334 (FSGLYILSFTVIMVGFILYCS). A Phosphoserine modification is found at Ser-372.

This sequence belongs to the SLC35F solute transporter family.

It is found in the membrane. Its function is as follows. Putative solute transporter. The polypeptide is Solute carrier family 35 member F2 (Slc35f2) (Mus musculus (Mouse)).